Here is an 80-residue protein sequence, read N- to C-terminus: Raniseptin-4 (80 aa).

Positions 1–22 (MAFLKKSLFLVLFLGIVSLSIC) are cleaved as a signal peptide. Residues 23-49 (EEEKREGEEEEKQEEENEELSEEELRD) constitute a propeptide that is removed on maturation.

Belongs to the frog skin active peptide (FSAP) family. Dermaseptin subfamily. In terms of tissue distribution, expressed by the skin glands.

It is found in the secreted. Has antibacterial activity. The polypeptide is Raniseptin-4 (Boana raniceps (Chaco tree frog)).